A 137-amino-acid chain; its full sequence is Putative pre-16S rRNA nuclease (137 aa).

Belongs to the YqgF nuclease family.

The protein localises to the cytoplasm. Its function is as follows. Could be a nuclease involved in processing of the 5'-end of pre-16S rRNA. This is Putative pre-16S rRNA nuclease from Bacillus cereus (strain B4264).